Consider the following 23-residue polypeptide: Magainin-R2 (23 aa).

In terms of tissue distribution, expressed by the skin glands.

It is found in the secreted. Antimicrobial peptide. In Xenopus ruwenzoriensis (Uganda clawed frog), this protein is Magainin-R2.